Reading from the N-terminus, the 349-residue chain is D-alanine--D-alanine ligase (349 aa).

One can recognise an ATP-grasp domain in the interval 140–345 (NILFEAMGIP…MKDVFTWLLE (206 aa)). Residue 169-224 (NLSFSYPVFIKPTLGGSSVNTGMAKTAEEAMTLVDKIFVTDDRVLVQKLVSGTEVS) coordinates ATP. 3 residues coordinate Mg(2+): Asp300, Glu312, and Asn314.

It belongs to the D-alanine--D-alanine ligase family. Requires Mg(2+) as cofactor. Mn(2+) serves as cofactor.

The protein localises to the cytoplasm. The catalysed reaction is 2 D-alanine + ATP = D-alanyl-D-alanine + ADP + phosphate + H(+). It participates in cell wall biogenesis; peptidoglycan biosynthesis. Cell wall formation. In Leptospira biflexa serovar Patoc (strain Patoc 1 / Ames), this protein is D-alanine--D-alanine ligase.